The following is a 286-amino-acid chain: Pantothenate synthetase (286 aa).

30–37 (MGALHEGH) is an ATP binding site. His37 acts as the Proton donor in catalysis. Gln61 contributes to the (R)-pantoate binding site. Gln61 is a beta-alanine binding site. 147–150 (GEKD) serves as a coordination point for ATP. (R)-pantoate is bound at residue Gln153. Residues Leu176 and 184–187 (HSSR) each bind ATP.

Belongs to the pantothenate synthetase family. In terms of assembly, homodimer.

Its subcellular location is the cytoplasm. It carries out the reaction (R)-pantoate + beta-alanine + ATP = (R)-pantothenate + AMP + diphosphate + H(+). Its pathway is cofactor biosynthesis; (R)-pantothenate biosynthesis; (R)-pantothenate from (R)-pantoate and beta-alanine: step 1/1. Functionally, catalyzes the condensation of pantoate with beta-alanine in an ATP-dependent reaction via a pantoyl-adenylate intermediate. The chain is Pantothenate synthetase from Bartonella tribocorum (strain CIP 105476 / IBS 506).